Reading from the N-terminus, the 314-residue chain is MGVMAAVGALPAGAGSLPPLPTLGVPGVPELKPLTRYEAMRLGPGWSHSCHAMLYAPNPGMLFGRIPLRYAVLMQMRFDGLLGFPGGFVDRRYWSLEDGLNRVLGLGLGCVRLTEADYLCSHLTDGPHRVVAHLYARQLTLEELHTIEISAVHSRDHGLEVMGMVRVPLYTQKDRMGGLPNFLANSFVGTAKFQLLFALKILNMVPEEKLAEAVAATQKPKKPAIDHAAVAAAKQANELAAAARAGNEYADSGENQAAAHAAAELAEQQAAGLESQAVLEHLAAVPGAEAVVAELHAQPGADAVLEQPVAEAME.

A lipid anchor (N-myristoyl glycine) is attached at Gly-2.

The protein belongs to the Nudix hydrolase family. TIRR subfamily. As to quaternary structure, interacts (via the cytoplasmic part) with syndecan-4 (SDC4), but not with other syndecan proteins. Myristoylated in vitro; additional evidence is however required to confirm myristoylation in vivo. Ubiquitously expressed. Expressed in embryonic brain, eyes, gizzard, heart, intestine, kidney, liver, tibia and skin.

Its subcellular location is the nucleus. The protein localises to the cytoplasm. It is found in the cytoskeleton. It localises to the cell membrane. The protein resides in the cell junction. Its subcellular location is the focal adhesion. Its function is as follows. Key regulator of TP53BP1 required to stabilize TP53BP1 and regulate its recruitment to chromatin. This chain is Tudor-interacting repair regulator protein (NUDT16L1), found in Gallus gallus (Chicken).